Reading from the N-terminus, the 411-residue chain is Serine hydroxymethyltransferase (411 aa).

Residue 120-122 participates in (6S)-5,6,7,8-tetrahydrofolate binding; the sequence is GHL. K225 carries the post-translational modification N6-(pyridoxal phosphate)lysine. Residues E241 and 350–352 each bind (6S)-5,6,7,8-tetrahydrofolate; that span reads SPF.

Belongs to the SHMT family. As to quaternary structure, homodimer. The cofactor is pyridoxal 5'-phosphate.

The protein localises to the cytoplasm. It catalyses the reaction (6R)-5,10-methylene-5,6,7,8-tetrahydrofolate + glycine + H2O = (6S)-5,6,7,8-tetrahydrofolate + L-serine. It participates in one-carbon metabolism; tetrahydrofolate interconversion. The protein operates within amino-acid biosynthesis; glycine biosynthesis; glycine from L-serine: step 1/1. Functionally, catalyzes the reversible interconversion of serine and glycine with tetrahydrofolate (THF) serving as the one-carbon carrier. This reaction serves as the major source of one-carbon groups required for the biosynthesis of purines, thymidylate, methionine, and other important biomolecules. Also exhibits THF-independent aldolase activity toward beta-hydroxyamino acids, producing glycine and aldehydes, via a retro-aldol mechanism. This chain is Serine hydroxymethyltransferase, found in Limosilactobacillus fermentum (strain NBRC 3956 / LMG 18251) (Lactobacillus fermentum).